Reading from the N-terminus, the 298-residue chain is MENFQKVEKIGEGTYGVVYKAKNKLTGEVVALKKIRLDTETEGVPSTAIREISLLKELNHPNIVKLLDVIHTENKLYLVFEFLHQDLKKFMDASALTGLPLPLIKSYLFQLLQGLAFCHSHRVLHRDLKPQNLLINAEGSIKLADFGLARAFGVPVRTYTHEVVTLWYRAPEILLGCKYYSTAVDIWSLGCIFAEMVTRRALFPGDSEIDQLFRIFRTLGTPDEVVWPGVTSMPDYKPSFPKWARQDFSKVVPPLDEDGRSLLSQMLHYDPNKRISAKAALAHPFFQDVTKPVPHLRL.

Residue M1 is modified to N-acetylmethionine. The Protein kinase domain maps to 4–286 (FQKVEKIGEG…AKAALAHPFF (283 aa)). An N6-acetyllysine modification is found at K6. Residue 10–18 (IGEGTYGVV) participates in ATP binding. T14 is modified (phosphothreonine). Residue Y15 is modified to Phosphotyrosine; by WEE1. Position 19 is a phosphotyrosine (Y19). ATP-binding positions include K33, 81 to 83 (EFL), and D86. The Proton acceptor role is filled by D127. ATP is bound by residues 129 to 132 (KPQN) and D145. N132 and D145 together coordinate Mg(2+). A Phosphothreonine; by CAK and CCRK modification is found at T160.

Belongs to the protein kinase superfamily. CMGC Ser/Thr protein kinase family. CDC2/CDKX subfamily. As to quaternary structure, found in a complex with CABLES1, CCNA1 and CCNE1. Interacts with CABLES1. Interacts with UHRF2. Part of a complex consisting of UHRF2, CDK2 and CCNE1. Interacts with the Speedy/Ringo proteins SPDYA and SPDYC. Interaction with SPDYA promotes kinase activation via a conformation change that alleviates obstruction of the substrate-binding cleft by the T-loop. Found in a complex with both SPDYA and CDKN1B/KIP1. Binds to RB1. Binds to CDK7. Binding to CDKN1A (p21) leads to CDK2/cyclin E inactivation at the G1-S phase DNA damage checkpoint, thereby arresting cells at the G1-S transition during DNA repair. Associated with PTPN6 and beta-catenin/CTNNB1. Interacts with CACUL1. May interact with CEP63. Interacts with ANKRD17. Interacts with CEBPA (when phosphorylated). Forms a ternary complex with CCNA2 and CDKN1B; CDKN1B inhibits the kinase activity of CDK2 through conformational rearrangements. Interacts with cyclins A, B1, B3, D, or E. Interacts with CDK2AP2. Requires Mg(2+) as cofactor. Post-translationally, phosphorylated at Thr-160 by CDK7 in a CAK complex. Phosphorylation at Thr-160 promotes kinase activity, whereas phosphorylation at Tyr-15 by WEE1 reduces slightly kinase activity. Phosphorylated on Thr-14 and Tyr-15 during S and G2 phases before being dephosphorylated by CDC25A. Nitrosylated after treatment with nitric oxide (DETA-NO).

It localises to the cytoplasm. The protein localises to the cytoskeleton. It is found in the microtubule organizing center. Its subcellular location is the centrosome. The protein resides in the nucleus. It localises to the cajal body. The protein localises to the endosome. It carries out the reaction L-seryl-[protein] + ATP = O-phospho-L-seryl-[protein] + ADP + H(+). The enzyme catalyses L-threonyl-[protein] + ATP = O-phospho-L-threonyl-[protein] + ADP + H(+). Phosphorylation at Thr-14 or Tyr-15 inactivates the enzyme, while phosphorylation at Thr-160 activates it. Stimulated by MYC. Inactivated by CDKN1A (p21). In terms of biological role, serine/threonine-protein kinase involved in the control of the cell cycle; essential for meiosis, but dispensable for mitosis. Phosphorylates CABLES1, CTNNB1, CDK2AP2, ERCC6, NBN, USP37, p53/TP53, NPM1, CDK7, RB1, BRCA2, MYC, NPAT, EZH2. Triggers duplication of centrosomes and DNA. Acts at the G1-S transition to promote the E2F transcriptional program and the initiation of DNA synthesis, and modulates G2 progression; controls the timing of entry into mitosis/meiosis by controlling the subsequent activation of cyclin B/CDK1 by phosphorylation, and coordinates the activation of cyclin B/CDK1 at the centrosome and in the nucleus. Crucial role in orchestrating a fine balance between cellular proliferation, cell death, and DNA repair in embryonic stem cells (ESCs). Activity of CDK2 is maximal during S phase and G2; activated by interaction with cyclin E during the early stages of DNA synthesis to permit G1-S transition, and subsequently activated by cyclin A2 (cyclin A1 in germ cells) during the late stages of DNA replication to drive the transition from S phase to mitosis, the G2 phase. EZH2 phosphorylation promotes H3K27me3 maintenance and epigenetic gene silencing. Cyclin E/CDK2 prevents oxidative stress-mediated Ras-induced senescence by phosphorylating MYC. Involved in G1-S phase DNA damage checkpoint that prevents cells with damaged DNA from initiating mitosis; regulates homologous recombination-dependent repair by phosphorylating BRCA2, this phosphorylation is low in S phase when recombination is active, but increases as cells progress towards mitosis. In response to DNA damage, double-strand break repair by homologous recombination a reduction of CDK2-mediated BRCA2 phosphorylation. Involved in regulation of telomere repair by mediating phosphorylation of NBN. Phosphorylation of RB1 disturbs its interaction with E2F1. NPM1 phosphorylation by cyclin E/CDK2 promotes its dissociation from unduplicated centrosomes, thus initiating centrosome duplication. Cyclin E/CDK2-mediated phosphorylation of NPAT at G1-S transition and until prophase stimulates the NPAT-mediated activation of histone gene transcription during S phase. Required for vitamin D-mediated growth inhibition by being itself inactivated. Involved in the nitric oxide- (NO) mediated signaling in a nitrosylation/activation-dependent manner. USP37 is activated by phosphorylation and thus triggers G1-S transition. CTNNB1 phosphorylation regulates insulin internalization. Phosphorylates FOXP3 and negatively regulates its transcriptional activity and protein stability. Phosphorylates ERCC6 which is essential for its chromatin remodeling activity at DNA double-strand breaks. Acts as a regulator of the phosphatidylinositol 3-kinase/protein kinase B signal transduction by mediating phosphorylation of the C-terminus of protein kinase B (PKB/AKT1 and PKB/AKT2), promoting its activation. The polypeptide is Cyclin-dependent kinase 2 (Cdk2) (Rattus norvegicus (Rat)).